Reading from the N-terminus, the 398-residue chain is Leucine carboxyl methyltransferase 1 (398 aa).

Residues 1-11 (MSASQIPNLNT) are compositionally biased toward polar residues. The disordered stretch occupies residues 1-54 (MSASQIPNLNTLRRGGGRGRLRGRGGFETGAPSEDRHGSRGLAAQDRVVQGTDN). S-adenosyl-L-methionine-binding positions include Arg97, Gly123, Asp151, and 201-202 (DL). Residues 208–218 (SGSATTSRSPS) show a composition bias toward low complexity. The interval 208 to 232 (SGSATTSRSPSSPNPAEKDQPPCPL) is disordered. Position 246 (Glu246) interacts with S-adenosyl-L-methionine.

Belongs to the methyltransferase superfamily. LCMT family.

It catalyses the reaction [phosphatase 2A protein]-C-terminal L-leucine + S-adenosyl-L-methionine = [phosphatase 2A protein]-C-terminal L-leucine methyl ester + S-adenosyl-L-homocysteine. Functionally, methylates the carboxyl group of the C-terminal leucine residue of protein phosphatase 2A catalytic subunits to form alpha-leucine ester residues. This is Leucine carboxyl methyltransferase 1 (ppm1) from Aspergillus fumigatus (strain ATCC MYA-4609 / CBS 101355 / FGSC A1100 / Af293) (Neosartorya fumigata).